The sequence spans 96 residues: uncharacterized protein (96 aa).

3 residues coordinate [3Fe-4S] cluster: cysteine 10, cysteine 16, and cysteine 55. The tract at residues alanine 67–glycine 96 is disordered. Over residues glutamate 83 to glycine 96 the composition is skewed to basic and acidic residues.

[3Fe-4S] cluster is required as a cofactor.

Electron transport protein for the cytochrome systems. This is an uncharacterized protein from Bradyrhizobium diazoefficiens (strain JCM 10833 / BCRC 13528 / IAM 13628 / NBRC 14792 / USDA 110).